A 287-amino-acid polypeptide reads, in one-letter code: Phosphatidylglycerol--prolipoprotein diacylglyceryl transferase (287 aa).

The next 4 helical transmembrane spans lie at 15-35, 55-75, 90-110, and 117-137; these read IGPLSIYWYGIIIAFGAILAI, FVMFAVPIAIIFARIYYVFFE, IWEGGIAIHGAVIGGVITAIV, and VSFWQIADIVAPSLILGQAIG. Position 138 (R138) interacts with a 1,2-diacyl-sn-glycero-3-phospho-(1'-sn-glycerol). 2 helical membrane passes run 180 to 200 and 238 to 258; these read HPTFLYESVWNILIFVGLLLL and IIRTAQFISILIIIVSIIFII.

Belongs to the Lgt family.

The protein localises to the cell membrane. The enzyme catalyses L-cysteinyl-[prolipoprotein] + a 1,2-diacyl-sn-glycero-3-phospho-(1'-sn-glycerol) = an S-1,2-diacyl-sn-glyceryl-L-cysteinyl-[prolipoprotein] + sn-glycerol 1-phosphate + H(+). The protein operates within protein modification; lipoprotein biosynthesis (diacylglyceryl transfer). Its function is as follows. Catalyzes the transfer of the diacylglyceryl group from phosphatidylglycerol to the sulfhydryl group of the N-terminal cysteine of a prolipoprotein, the first step in the formation of mature lipoproteins. The chain is Phosphatidylglycerol--prolipoprotein diacylglyceryl transferase from Oceanobacillus iheyensis (strain DSM 14371 / CIP 107618 / JCM 11309 / KCTC 3954 / HTE831).